A 58-amino-acid chain; its full sequence is Small ribosomal subunit protein bS21B (58 aa).

Belongs to the bacterial ribosomal protein bS21 family.

The chain is Small ribosomal subunit protein bS21B (rpsU2) from Nostoc sp. (strain PCC 7120 / SAG 25.82 / UTEX 2576).